Consider the following 45-residue polypeptide: C-phycocyanin beta subunit (45 aa).

This sequence belongs to the phycobiliprotein family. In terms of assembly, heterodimer of an alpha and a beta subunit. The hererodimer further assembles into trimers and the trimers into hexamers. Contains two covalently linked bilin chromophores.

It is found in the cellular thylakoid membrane. In terms of biological role, light-harvesting photosynthetic bile pigment-protein from the phycobiliprotein complex (phycobilisome, PBS). Phycocyanin is the major phycobiliprotein in the PBS rod. This Limnospira fusiformis (Arthrospira fusiformis) protein is C-phycocyanin beta subunit (cpcB).